Here is a 593-residue protein sequence, read N- to C-terminus: Metal-response element-binding transcription factor 2 (593 aa).

The interval 1-35 (MRDSTGAGNSLVHKRSPLRRNQKTPTSLTKLSLQD) is disordered. Over residues 12–22 (VHKRSPLRRNQ) the composition is skewed to basic residues. Residues 23–32 (KTPTSLTKLS) show a composition bias toward polar residues. Thr-24 bears the Phosphothreonine mark. Residues 44-101 (CKFEEGQDVLARWSDGLFYLGTIKKINILKQSCFIIFEDSSKSWVLWKDIQTGATGSG) form the Tudor domain. PHD-type zinc fingers lie at residues 102–157 (EMVC…CVFA) and 201–255 (QCYC…CSSG). A Glycyl lysine isopeptide (Lys-Gly) (interchain with G-Cter in SUMO2) cross-link involves residue Lys-360. Residues 360–374 (KAEKEPEGTSHEFKI) show a composition bias toward basic and acidic residues. Disordered regions lie at residues 360-411 (KAEK…PYTR) and 424-486 (KESI…TRTG). The span at 445–454 (TAHSSNTSDV) shows a compositional bias: polar residues. Ser-452 carries the phosphoserine modification. A compositionally biased stretch (low complexity) spans 459-471 (ASSAKETTSSSIS). A Glycyl lysine isopeptide (Lys-Gly) (interchain with G-Cter in SUMO2) cross-link involves residue Lys-522.

The protein belongs to the Polycomblike family. As to quaternary structure, associates with the PRC2 complex, which consists of the core components EED, EZH1 or EZH2, SUZ12, and RBBP4, and various combinations of accessory subunits including AEBP2, JARID2, PHF19, MTF2 and EPOP. Forms a dimeric PRC2.1 (class 1, PRC-PCL) complex consisting of at least SUZ12, RBBP4, and PHF19 or MTF2; PHF19 and MTF2 stabilize the dimeric structure which enhances PRC2 interaction with chromatin.

Its subcellular location is the nucleus. In terms of biological role, polycomb group (PcG) protein that specifically binds histone H3 trimethylated at 'Lys-36' (H3K36me3) and recruits the PRC2 complex, thus enhancing PRC2 H3K27me3 methylation activity. Regulates the transcriptional networks during embryonic stem cell self-renewal and differentiation. Promotes recruitment of the PRC2 complex to the inactive X chromosome in differentiating XX ES cells and PRC2 recruitment to target genes in undifferentiated ES cells. Required to repress Hox genes by enhancing H3K27me3 methylation of the PRC2 complex. In some conditions may act as an inhibitor of PRC2 activity: able to activate the CDKN2A gene and promote cellular senescence by suppressing the catalytic activity of the PRC2 complex locally. Binds to the metal-regulating-element (MRE) of MT1A gene promoter. This chain is Metal-response element-binding transcription factor 2 (MTF2), found in Homo sapiens (Human).